A 5084-amino-acid chain; its full sequence is MAIKMIDKQVLACNLDAFAGRVTNSTDINEQAIEWLSPTPSAVTLEAAWCVTLRLYTGLDHLSFGSLTQDGIVATKLCNLGPHDTLEDVCSHVQLYDYSDDTVCHYNTAVIFKLDENEGKKLSELIPRGIDVALMVTGSNLGVLARASFMDADEARNLCQNFRHVLNCFQEPNQAVRGITLSDNDVNQILSWNKSQLTRTESLIHDQFARILQRQPDKSAIESWDGNMTYRELDAASSSLAESLSRANIGPGSWVLFCFNKSRWAIVSMLAILKAGGACVPLDPRHPKSRVVQILQATGAQHILVGDADNDIKNRLCNEFPSVKVIGVPHHEVCESQDIDTISLSFDSPAIGLFTSGSTGTPKGIVATHATICTGASSYAHHIGADDKTRVLQFASYTFDVCMVDVFTALLHGGTLCIPSEEERMTGLQEYISRTQPNWAALTPTVARVLDPALSSKSIRKILLVGEMVRESDIAEWLDSGVQVYNVYGPAENNLITTAAKAIRGRASNVGTGINTHTWVADVENERLVPIGAVGELICSGPHLTPGYLNDPERTASSFFEDLSWIPNMMDNKPFSRRFYRSGDLVRYCADGSLQCVGRLDSQVKLGGQRVELSEIESYIKSHNAAVLVPKAGSMKNKLIAVLEGAGSSGQSLGISSCDPGVAQQVEQVLRKNLPSYMCPSIWISVPHLPLSSSGKLDRKVLMNKLETLSHEEYLGLILDHAQDEDDQDGHETDNCQRLLREACSQVLNIPVERIAMSRAFAGHGGDSITAMQVSSLIKRTQTLVVTVKDLLTCHSLAEAASSMREVVTSIQVPTAHPGKLYPLSPIQRLFMATAPTSVTWNHYNQSVLLRIRERRSSDHVKESLGGVVRRHAMLRGRFQRVSSSEWMQRILPDDQGNLFFEYFPDASDYKQREALMLKARESLDIESGPLLRAQLFDGQVEQGMLLFIVSHHLVVDLVSWRVILEELEVSLAQPYGNTTDANDISALLLPQESVPFPVWSELQHEAAKNMDPDRVIPQQYAVPAPDFSYWGISSARNVYRDVIEKSISLGDMTTKNVLYECHEALQTEPVDIFLSAILLSFKRAFPERPIPPIFNEGHGREPWTSDLDISRTVGWFTTMFPIYVPNISAGDVVDTVRRVKDFRKGCAENGFQYFSTKYLHEQGRKTFKDHIPAEIMFNYEGRYQSLEKEKSLLMAEAWEAGEALSDSAPELQRFCLFELSAAVLTDGEIHFTMAWNSRARYQERISLWLTRLLPAVIDEIVTYLMLEKRQYTLSDLSQARLSDYSDLETLMASVSTIPGIDSIEGVEEIYCGSPMQDSLALSQSRISGGVYEIDLTWEVTDGRQGNYQVDVNRLVLAWNDVVARHAALRTVFLEAASSSNDVMLHQVVLRKYRPSTILMHTRDSSQALKQLSSCASYKKRGILIDKRPPHALAICSTDEGRTFVRFQVNHILFDGTSIAPLLRDLSRAYRNSHEVRREWTWNPFANFIRYIRDEKRRSDDLAYWKSYLATARPCQFPTLKHEESIEAPGTEQQRGAVQVCMSDKPSSLRNFLADMGVTVPTLVQLVWALVLRMYTSDSQVAFGYLASGRDAPVVDIEQAVGPFISILVHFLDFDNEGQLPIADMLQRIQDRSARSISHQSRSLAEIQDAIGLTGSSLLFNTGISFMPKWTKDMQLRNGSGLIFDQIAANDPTEFDISLIVETGDDGVDGMCIYVDYRTSTVGRMHAINIAASFDHILSQIIQDPSVPLNDVSGISTRDFDQISNWNRLLSPPKDKCLHDLFIEKVIEDPTREAVFSWDGSMSYGELHDLSARLANYLVHLGVGPEQMIPICFEKSVWTVVTILAVLKAGGCFVLLDPTHPASRLWNIVGEIEASILLCSPLTNRSKKLDASPDMNARKAAIIEIHPSFVNNLKSVSRESQHTPLCPSLSPDNAAYVVFTSGSTGIPKGVVVTHRAVVTGLDELGRAAGMTAMGSGTRTLQFASYSFDASIADIFCALQLGGCVCVMSDEGRSPADITDFIQRSRATYAGITPSFASLLDPRLVPSLRVLCFSGEALPASQIEAWSGYVKMVNMYGPTEASIACIANSEVTRTTDASNIGRAFRGSTWIVDENDHNQLRAIGSSGELLIEGPILAREYLKRPEQTAQAFISNPPWLQNIRPNSRLYKTGDMVRYNTNGTISYIGRKDNQIKINGQRVEVSEIEETLRASIEPEAGLITVELLDRKALGEADVLTAFVYIAGHDPSSTRDDKADNKKPFTIPDNPLLLEYFRSMLPRLESSSSKMPRYMVPQAYIPIDSLPLTTSGKVDRRALRHAAAQLNRNQLFSFASSLDMVHEPSVDVVKDDPVSELAHLWESVLNVRVSGTQSNFFRLGGNSMAAMNLRSQARKAGFQLSVADILANPTLSDMAKGMAPLSLTAPESTSSSSPQSFSTSTSTTIIENDPDTSPFSLLRTRGIALNEGLWQQMFDNADILWSEVEDIFPCTPMQEGLMVLSAHREGHGAYALHAPYKLPSDLDLAKLQFAWEQTTMVHAILRSRIVTHSQGALIVLQKSPVVVQQSTCSTLDDHLEEQRRLIFGYGVPLFRMTMVFDQIAQCHYFVMSIHHALFDGWSFSRMWDTALAIYQGRQLSRDIPSFQSFVQHLGAAPLSASKEYWKSHLVEQDRDGFQFPAVPSTHKPIATASASFEFAFQSTIAMSAGVTPSTMVHAAWAILLSQYTASSTVNFGVTLSGRDFPMPGLDQVVGATIVTLPRQLNINLNQNVIEFLEYVQQEAANVIPHQYLGIHEIRALGLEAQQACNFSTLILVNHNTVDLDSPLSVFGITQVPVDSVDFHPYPLAVEFTVQPESLVVNVCYDPVCIGGSMVESVMQQYDHVLQSLSEGLMCSSGLSGTNLASIMTGIAPAHLQKMLDWNKDGHRYGASRQTHLVLDHIGLNTRNNPRARAVVADDSTLSYAELNRLARVVSHRITQLDISGEFIAVCFDKSAAAIVSMLAVLQTGFAFMPISASQPPARLENLLTAANVQVVLTSPAHTDLLSGLSSHRRIVPVDLKDIDQHEQMQLNRSGSAVDKSRAAYLLYTSGTTGQPKGVVVQHGAWSKAIASQIDFFGFTRDTKMLQFSNYTFDASIFEIFITLCSGGCLFVPSEHSRVNDLEGFIRTNELNTITLTPTVARVIRPGQLPCVRQCLFGGESLTQSDIFAWAQQGRRVTNCYGPTEACVFSCGRDIRLDATDTKVTNIGRPVGINAWIISSMSGSISPIGAPGELCLEGQMLARGYLNDPERTQLSFSNHLPNNIPGKKNSRTYRTGDMVCHEADGTLNFLGRRDGQIKLRGHRIDVGEIEHHIQHAMADDSTYHSSTVQVYWKDTRNKSDAELAALLRMDIQHKECVMGVPCSLLSMPGRADESPTASQLKFKLRRILPEHMTPNTFIAVQHFPTTASGKLDRSFAQRCVEYFVPYTQKEVNKNETWSSSEAIVREWWCSILGVNTDLICRHDNFFGLGGNSIYAIRLVGLARSNGHHLQYEDVFSSPVLADMASRLSRPEDSRVQSETRQPPEPFQLISESDLKSVMDDILPLYNINKDEVEDIYPCTPLQATLMAETARHRGVYILAESIQVPSSQMTLFQDAWLLMFKSYEILRTRIVLSHDQSHGEWQVVMKYQPLTWTEFPDAKSFIEFVYNTHDYGKPLVHLAILGGNGGRIKDTDHSVKVGLCVHHAAYDGWSLSNIWRTITKKLTSSSSYSVGPYTPFNTYIRHLTEQDPEKAKSYWKERFSGLSSASLIPRPQDPGHQSSATDTIQRNLDLPTLSDHLLGKTAIVAQAAWAITISHYTANSDTLCGTILSGREYAAASVPGVETIVGPTIATVPSRTTINYDSCVLDLITAVQKDNLNAVRFSHMGLEQISRLNLDCRQACKFDNLFWVQPDLDETPANSIIRDIINVRGFSSSPMVLEIQLPAEGQKVVVNMSFDRVAVSNQQAELIVDTYITIMDNLLHAPLDTRLRSIAALSPAHISQISRVSSSPVEAVQACVHDLVRKQVELSPSHTAIDAWDGSMAYAALDALSTSLAEKLSGLGIGPESPVCILFEKSKWAIVAMLGVVKTGGCFVPLNPQSPIKRLQHLVESVDASIILVSPQYEELSISLSLHHVKILVISQDTIPSPISALKPSRAFPSSVGPQNAAYILFTSGSTGLPKGVVIEHQALCSSLTVLSSRVGLNSNSRVFQFNAYWFDVMLLDVFGTLISGGTICAPSESDCMDDLAGSINKFNANTIAALSTSVSRLIEPSSIPCLNTLGLGGEPVLSSDRDRWAPHVRLFSMYGPTETCIVSLMTDMTSTTPASLLGHPVGCRVWIVNPLKNDELAPLGGIGELFIEGPGLARYYLVDEDKTAAAFLSNQSWTIQDPSFQGSRRFYKTGDLVRINTDGTVSWIGRKDHSQVKIRGQRVELAEIEETIRQHIPSALTVAVDILIDGERRILAAVFGTNLMLPGLSDTEVEVYMEKLIKGLLPKLNGSLPKHMVPTAFIPLPFLPFLSTGKLDRKALHRLALPLAVELTKRTSTNRQALKTPKERLLSALWSEVLSTSKGEPAGPADNFFNAGGDSMMAMKLVAMARHRGLTLSVVDIFKNPILSDMADLLGPLRHEEEPSKEDSTHMLPIDTSSKLKDSLYEVLTVPPDRIEQIYPCTAYQEMFLSGTEVWPGAHVTQFIFSIDKGTDMHRLEKAMGRCTAEFPTLRTRIVRHGESGQLLQVVLHKGHEAPWSIHLTDDLDSALDQEKKDHWMHSGLSEPLHRLSLVMNNSGCTHLIWSLNHAAYDAWSFGMMLRSLGQDRANSTRHSRTCLPFNGLIRHISKLRDASSESRRFWRSYIADIGSQVLLFRYPSIADPRQDRLAVHQVSFPKHGGRSSTSLITAAWIMLLARLSHRKDITIAYLVTGRTLPLGGIDTCPGPLISKLPLRIQLLDEPRGLVDVADLVRIETVRVMPHEHTGLDAIKDLASQDDDDIHPHAASLLGRFPLDLAIHPAGHTDVDAARSIGITHIGQKVVVPPPGTFSAECSIISEDNYIAVSLAVIWDNRAMDEDDVNRVVEIWKDIIVRG.

Positions 209–606 (ARILQRQPDK…VGRLDSQVKL (398 aa)) are adenylation 1. Residues 731-808 (HETDNCQRLL…EAASSMREVV (78 aa)) enclose the Carrier 1 domain. S768 is subject to O-(pantetheine 4'-phosphoryl)serine. 2 condensation regions span residues 822 to 1124 (YPLS…FPIY) and 1309 to 1609 (EIYC…SILV). Positions 1788 to 2192 (EDPTREAVFS…IGRKDNQIKI (405 aa)) are adenylation 2. One can recognise a Carrier 2 domain in the interval 2341-2415 (VVKDDPVSEL…DMAKGMAPLS (75 aa)). S2376 is subject to O-(pantetheine 4'-phosphoryl)serine. The disordered stretch occupies residues 2415–2441 (SLTAPESTSSSSPQSFSTSTSTTIIEN). Low complexity predominate over residues 2421–2437 (STSSSSPQSFSTSTSTT). Residues 2478-2755 (EDIFPCTPMQ…IVTLPRQLNI (278 aa)) form a condensation 3 region. The tract at residues 2935-3328 (RNNPRARAVV…GRRDGQIKLR (394 aa)) is adenylation 3. One can recognise a Carrier 3 domain in the interval 3463–3539 (ETWSSSEAIV…DMASRLSRPE (77 aa)). S3500 carries the post-translational modification O-(pantetheine 4'-phosphoryl)serine. Positions 3581–3866 (EDIYPCTPLQ…IATVPSRTTI (286 aa)) are condensation 4. Positions 4029-4426 (RKQVELSPSH…TVSWIGRKDH (398 aa)) are adenylation 4. The 78-residue stretch at 4554–4631 (ALKTPKERLL…DMADLLGPLR (78 aa)) folds into the Carrier 4 domain. S4592 bears the O-(pantetheine 4'-phosphoryl)serine mark. The interval 4669–4948 (EQIYPCTAYQ…ISKLPLRIQL (280 aa)) is condensation 5.

This sequence belongs to the NRP synthetase family.

Its pathway is secondary metabolite biosynthesis. Functionally, non-ribosomal peptide synthetase; part of the gene cluster that mediates the biosynthesis of the cyclic tetrapeptide apicidin F (APF). The non-ribosomal peptide synthetase apf1 incorporates four different amino acids to produce apicidin F: L-phenylalanine, D-pipecolic acid (D-pip), N-methoxy-L-tryptophan and L-2-aminooctanedioic acid. L-Phenylalanine is the only proteinogenic amino acid directly used by apf1. The 3 other apf1 substrates are non-proteinogenic and have to be modified by other enzymes of the cluster. Lysine is converted to delta-1-pyrroline-5-carboxylate (P5C) which is reduced to L-pipecolic acid (L-pip) by apf3. L-pip is epimerized to D-pip, probably by apf1 activity, prior to incorporation. L-Tryptophan is N-oxidyzed by one of the cytochrome P450 monooxygenases (apf7 or apf8), and further methylated at the hydroxy group by the O-methyltransferase apf6 to yield N-methoxy-L-tryptophan. The synthesis of the fourth apf1 substrate is more complex. The fatty acid synthase apf5 is involved in the synthesis of the octanoic acid backbone of L-2-aminooctanedioic acid by fixing one acetyl-CoA unit and three malonyl-CoA units. Then one of the cytochrome P450 monooxygenases (apf7 or apf8) may oxidize this backbone to 2-oxooctanoic acid. The aminotransferase apf4 is predicted to catalyze the exchange of the keto group with an amino group. The next step would be the oxidation of 2-aminooctanoic acid by one of the cytochrome P450 monooxygenases (apf7 or apf8). The last step is the oxidation of 2-amino-8-hydroxyoctanoic acid to 2-aminooctanedioic acid is catalyzed by the FAD-dependent monooxygenase apf9. The sequence is that of Apicidin F synthase from Gibberella fujikuroi (strain CBS 195.34 / IMI 58289 / NRRL A-6831) (Bakanae and foot rot disease fungus).